A 446-amino-acid chain; its full sequence is Exodeoxyribonuclease 7 large subunit (446 aa).

Belongs to the XseA family. Heterooligomer composed of large and small subunits.

It is found in the cytoplasm. It carries out the reaction Exonucleolytic cleavage in either 5'- to 3'- or 3'- to 5'-direction to yield nucleoside 5'-phosphates.. Its function is as follows. Bidirectionally degrades single-stranded DNA into large acid-insoluble oligonucleotides, which are then degraded further into small acid-soluble oligonucleotides. This Streptococcus pneumoniae serotype 4 (strain ATCC BAA-334 / TIGR4) protein is Exodeoxyribonuclease 7 large subunit.